The chain runs to 262 residues: 14-3-3 protein homolog (262 aa).

It belongs to the 14-3-3 family.

In Trichoderma harzianum (Hypocrea lixii), this protein is 14-3-3 protein homolog.